We begin with the raw amino-acid sequence, 342 residues long: Glycerol-3-phosphate dehydrogenase [NAD(P)+] (342 aa).

NADPH contacts are provided by tryptophan 11, arginine 33, and lysine 112. The sn-glycerol 3-phosphate site is built by lysine 112, glycine 147, and serine 149. Residue alanine 151 participates in NADPH binding. Residues lysine 202, aspartate 255, serine 265, arginine 266, and asparagine 267 each contribute to the sn-glycerol 3-phosphate site. Lysine 202 (proton acceptor) is an active-site residue. Arginine 266 is an NADPH binding site. NADPH is bound by residues valine 290 and glutamate 292.

This sequence belongs to the NAD-dependent glycerol-3-phosphate dehydrogenase family.

The protein resides in the cytoplasm. It carries out the reaction sn-glycerol 3-phosphate + NAD(+) = dihydroxyacetone phosphate + NADH + H(+). It catalyses the reaction sn-glycerol 3-phosphate + NADP(+) = dihydroxyacetone phosphate + NADPH + H(+). It participates in membrane lipid metabolism; glycerophospholipid metabolism. Catalyzes the reduction of the glycolytic intermediate dihydroxyacetone phosphate (DHAP) to sn-glycerol 3-phosphate (G3P), the key precursor for phospholipid synthesis. The polypeptide is Glycerol-3-phosphate dehydrogenase [NAD(P)+] (Cupriavidus metallidurans (strain ATCC 43123 / DSM 2839 / NBRC 102507 / CH34) (Ralstonia metallidurans)).